Reading from the N-terminus, the 723-residue chain is Malonamoyl-CoA synthetase vrtB (723 aa).

This sequence belongs to the ATP-dependent AMP-binding enzyme family.

It participates in secondary metabolite biosynthesis; terpenoid biosynthesis. In terms of biological role, malonamoyl-CoA synthetase; part of the gene cluster that mediates the biosynthesis of viridicatumtoxin, a tetracycline-like fungal meroterpenoid with a unique, fused spirobicyclic ring system. The first step of the pathway is the production of the malonamoyl-CoA starter unit for the polyketide synthase vrtA. The aldolase vrtJ may be involved in the synthesis of the malonamate substrate for malonamoyl-CoA synthetase vrtB. The polyketide synthase vrtA then may utilize the malonamoyl-CoA starter unit, followed by sequential condensation of eight malonyl-CoA units to form the polyketide backbone. The cyclization of the last ring could be mediated by the lactamase-like protein vrtG. The proposed post-PKS tailoring steps are a hydroxylation at C5 catalyzed the cytochrome P450 monooxygenase vrtE, a hydroxylation at C12a catalyzed by VrtH and/or VrtI, and an O-methylation by the O-methyltransferase vrtF. VrtC is then proposed to catalyze the transfer of a geranyl group synthesized by vrtD to the aromatic C ring of the tetracyclic polyketide intermediate of viridicatumtoxin to yield previridicatumtoxin. Finally, the cytochrome P450 monooxygenase vrtK catalyzes the spirocyclization of the geranyl moiety of previridicatumtoxin to afford viridicatumtoxin. The chain is Malonamoyl-CoA synthetase vrtB from Penicillium aethiopicum.